Consider the following 742-residue polypeptide: Polyphosphate kinase (742 aa).

Residue N91 participates in ATP binding. Mg(2+) is bound by residues R431 and R461. H491 acts as the Phosphohistidine intermediate in catalysis. Y524, R624, and H652 together coordinate ATP. The interval 718–742 (WTASPQEGHSVRDHQESLMERHRSP) is disordered. Residues 726–742 (HSVRDHQESLMERHRSP) show a composition bias toward basic and acidic residues.

It belongs to the polyphosphate kinase 1 (PPK1) family. The cofactor is Mg(2+). Post-translationally, an intermediate of this reaction is the autophosphorylated ppk in which a phosphate is covalently linked to a histidine residue through a N-P bond.

It catalyses the reaction [phosphate](n) + ATP = [phosphate](n+1) + ADP. Functionally, catalyzes the reversible transfer of the terminal phosphate of ATP to form a long-chain polyphosphate (polyP). In Mycobacterium bovis (strain ATCC BAA-935 / AF2122/97), this protein is Polyphosphate kinase.